A 241-amino-acid chain; its full sequence is Fatty acid metabolism regulator protein (241 aa).

An HTH gntR-type domain is found at 11 to 79 (QSPAGLAEEY…HGKPTKVNNI (69 aa)). A DNA-binding region (H-T-H motif) is located at residues 39 to 58 (ERELAEKIGVTRTTLREVLQ).

As to quaternary structure, homodimer.

It is found in the cytoplasm. Its function is as follows. Multifunctional regulator of fatty acid metabolism. In Pasteurella multocida (strain Pm70), this protein is Fatty acid metabolism regulator protein.